Consider the following 579-residue polypeptide: Adenine/guanine permease AZG1 (579 aa).

The next 12 membrane-spanning stretches (helical) occupy residues 52–72, 131–151, 183–203, 221–241, 260–280, 292–312, 320–340, 379–399, 414–434, 459–479, 480–500, and 514–534; these read AGTA…SILS, LIVA…LMAN, TALA…AIGF, AGIG…IGLV, ISLA…AGGS, MESP…YCLV, IYGI…VTAF, FWEA…GTLY, FAGQ…GSLL, AITV…LASI, PAWA…KSVT, and FVTM…IGGI.

This sequence belongs to the nucleobase:cation symporter-2 (NCS2) (TC 2.A.40) family. Azg-like subfamily.

It localises to the membrane. Transports natural purines (adenine and guanine) as well as purine analogs. Confers sensitivity to 8-azaadenine and 8-azaguanine (8-azg). The polypeptide is Adenine/guanine permease AZG1 (AZG1) (Arabidopsis thaliana (Mouse-ear cress)).